A 357-amino-acid polypeptide reads, in one-letter code: MLGRALVRSFVQPTAAITTQLAGVHHHQEATDMKRFTGVTRSNKAKANRNTHVNEKLFRRMRGRKTLLIELPEDSAREKEAEMSPGEMRTELLKRGINPYKEAQPRVWNEAQVTFQSIYGIADPYVPPENPGSFTDVNNKFDEVKQRIQHKFYNWRMGTNRIRKKQGFEKFDIKTFCAKAEDIYVQAHRALEQRDKTAMYKYITEYAFAKMWPDVENGSVRFELISVLEPSRVVAVRCFDNPPKSGNDIAQITVRMHTRQKLAVYDRFGGLLLGSEDEEKDVVEYVVFENHIAVVDGEWRLHGKIYPKWIDAKQGMVGTQMLSAEQVEKQHAEAKALPLRTTEKLEEAKKEKEQQEI.

The interval 333-357 (EAKALPLRTTEKLEEAKKEKEQQEI) is disordered. The segment covering 341–357 (TTEKLEEAKKEKEQQEI) has biased composition (basic and acidic residues).

The protein belongs to the mitochondrion-specific ribosomal protein mL45 family.

It localises to the mitochondrion. This Caenorhabditis elegans protein is Large ribosomal subunit protein mL45 (mrpl-45).